Here is a 224-residue protein sequence, read N- to C-terminus: Myogenin (224 aa).

Phosphoserine; by CaMK2G occurs at positions 77 and 79. Residues 81–132 enclose the bHLH domain; that stretch reads DRRRAATLREKRRLKKVNEAFEALKRSTLLNPNQRLPKVEILRSAIQYIERL. Threonine 87 is subject to Phosphothreonine; by CaMK2G.

In terms of assembly, homodimer and heterodimer with E12; heterodimerization enhances MYOG DNA-binding and transcriptional activities. Interacts with SMARCA4/BRG1/BAF190A. Interacts (via C-terminal region) with SSRP1 and SUPT16H; the interaction is indicative of an interaction with the FACT complex. Interacts with CSRP3. Post-translationally, phosphorylated by CAMK2G on threonine and serine amino acids in a muscle activity-dependent manner. Phosphorylation of Thr-87 impairs both DNA-binding and trans-activation functions in contracting muscles.

The protein localises to the nucleus. Functionally, acts as a transcriptional activator that promotes transcription of muscle-specific target genes and plays a role in muscle differentiation, cell cycle exit and muscle atrophy. Essential for the development of functional embryonic skeletal fiber muscle differentiation. However is dispensable for postnatal skeletal muscle growth; phosphorylation by CAMK2G inhibits its transcriptional activity in respons to muscle activity. Required for the recruitment of the FACT complex to muscle-specific promoter regions, thus promoting gene expression initiation. During terminal myoblast differentiation, plays a role as a strong activator of transcription at loci with an open chromatin structure previously initiated by MYOD1. Together with MYF5 and MYOD1, co-occupies muscle-specific gene promoter core regions during myogenesis. Also cooperates with myocyte-specific enhancer factor MEF2D and BRG1-dependent recruitment of SWI/SNF chromatin-remodeling enzymes to alter chromatin structure at myogenic late gene promoters. Facilitates cell cycle exit during terminal muscle differentiation through the up-regulation of miR-20a expression, which in turn represses genes involved in cell cycle progression. Binds to the E-box containing (E1) promoter region of the miR-20a gene. Also plays a role in preventing reversal of muscle cell differentiation. Contributes to the atrophy-related gene expression in adult denervated muscles. Induces fibroblasts to differentiate into myoblasts. In Bos taurus (Bovine), this protein is Myogenin (MYOG).